The sequence spans 307 residues: Nuclear polyadenylated RNA-binding protein nab2 (307 aa).

Residues 102–135 (STDKSQQSFSVPETSIQPQSSQTPNITSLREEKE) are disordered. Positions 105–129 (KSQQSFSVPETSIQPQSSQTPNITS) are enriched in polar residues. 3 C3H1-type zinc fingers span residues 178-202 (TQEVPLCKYADKCSRANCIFAHPTP), 217-232 (CASGKECKAADCVKGH), and 254-268 (CKYKPCLNPACRFIH). Positions 274-307 (NMTWRPPSKTEETSLSERSFAVNESEEQLHVPSV) are disordered.

Belongs to the ZC3H14 family.

Its subcellular location is the nucleus. Functionally, RNA-binding protein involved in RNA processing. Acts as a regulator of mRNA stability: binds to mRNAs and pre-mRNAs, preventing their degradation. Involved in the biogenesis of circular RNAs (circRNAs) which are produced by back-splicing circularization of pre-mRNAs. The sequence is that of Nuclear polyadenylated RNA-binding protein nab2 from Schizosaccharomyces pombe (strain 972 / ATCC 24843) (Fission yeast).